An 80-amino-acid chain; its full sequence is Large ribosomal subunit protein uL29 (80 aa).

It belongs to the universal ribosomal protein uL29 family.

The protein is Large ribosomal subunit protein uL29 of Saccharopolyspora erythraea (strain ATCC 11635 / DSM 40517 / JCM 4748 / NBRC 13426 / NCIMB 8594 / NRRL 2338).